Here is an 87-residue protein sequence, read N- to C-terminus: Antitoxin epsilon (87 aa).

The protein belongs to the epsilon antitoxin family. As to quaternary structure, in the presence of the zeta toxin, forms an inactive PezA(2)PezT(2) heterotetramer.

Functionally, antitoxin component of a type II toxin-antitoxin (TA) system. Neutralizes the toxic effect of cognate zeta toxin. Part of a postsegregational killing (PSK) system involved in the killing of plasmid-free cells. Continuous synthesis of the epsilon antitoxin is required to counteract the zeta toxin. The polypeptide is Antitoxin epsilon (Lactococcus lactis subsp. lactis (Streptococcus lactis)).